A 1235-amino-acid polypeptide reads, in one-letter code: N-acetylglucosamine-1-phosphotransferase subunits alpha/beta (1235 aa).

Residues 22 to 42 (VCFVGVVVTIVSAFQFGEVVL) traverse the membrane as a helical segment. Asn83, Asn114, Asn148, and Asn179 each carry an N-linked (GlcNAc...) asparagine glycan. 4 disulfide bridges follow: Cys438-Cys461, Cys452-Cys468, Cys505-Cys528, and Cys519-Cys535. LNR repeat units follow at residues 438 to 473 (CAEG…GNTA) and 505 to 545 (CNQG…ELYK). Ca(2+) contacts are provided by Asp449, Asp464, Asp467, Asp516, Asp531, and Asp534. 2 N-linked (GlcNAc...) asparagine glycosylation sites follow: Asn614 and Asn729. A DMAP1-binding domain is found at 699–823 (NISLLPKEAQ…AQPTLGVTVS (125 aa)). 2 disordered regions span residues 751–783 (QART…HRSE) and 830–850 (LIVP…AEGN). Positions 837 to 848 (HLPKEEESDRAE) are enriched in basic and acidic residues. The 36-residue stretch at 984 to 1019 (VQPLNISQVFHEVDTDQSGVLSDREIRTLATRIHDL) folds into the EF-hand domain. An N-linked (GlcNAc...) asparagine glycan is attached at Asn988. Residues Asp997, Asp999, Ser1001, and Glu1008 each coordinate Ca(2+). Asn1108 carries N-linked (GlcNAc...) asparagine glycosylation. Residues 1194–1214 (VLATLIIFTIFSFFAEQIIAL) form a helical membrane-spanning segment.

It belongs to the stealth family. In terms of assembly, hexamer of two alpha, two beta and two gamma (GNPTG) subunits; disulfide-linked. The alpha and/or the beta subunits of the enzyme constitute the catalytic subunits. Interacts with LYSET; facilitates proper localization of GNPTAB. In terms of processing, the alpha- and beta-subunits are generated by a proteolytic cleavage by MBTPS1 protease at the Lys-907-Asp-908 bond.

The protein resides in the golgi apparatus membrane. The enzyme catalyses N(4)-[alpha-D-mannosyl-(1-&gt;2)-alpha-D-mannosyl-(glycan)]-L-asparaginyl-[protein] + UDP-N-acetyl-alpha-D-glucosamine = N(4)-[6-(N-acetyl-alpha-D-glucosaminyl-1-phospho)-alpha-D-mannosyl-(1-&gt;2)-alpha-D-mannosyl-(glycan)]-L-asparaginyl-[protein] + UMP + H(+). Functionally, catalyzes the formation of mannose 6-phosphate (M6P) markers on high mannose type oligosaccharides in the Golgi apparatus. M6P residues are required to bind to the M6P receptors (MPR), which mediate the vesicular transport of lysosomal enzymes to the endosomal/prelysosomal compartment. This is N-acetylglucosamine-1-phosphotransferase subunits alpha/beta (Gnptab) from Mus musculus (Mouse).